Here is a 451-residue protein sequence, read N- to C-terminus: Probable beta-1,4-xylosyltransferase GT43E (451 aa).

Over 1–88 (MVSSRRNTGG…SKSRGLSCKR (88 aa)) the chain is Cytoplasmic. The helical; Signal-anchor for type II membrane protein transmembrane segment at 89–109 (LAFHLFVCFMVGIFIGFMPFF) threads the bilayer. Topologically, residues 110-451 (SVDVSQKIVS…KNLDAVIPVT (342 aa)) are lumenal. 2 N-linked (GlcNAc...) asparagine glycosylation sites follow: Asn260 and Asn366.

This sequence belongs to the glycosyltransferase 43 family.

The protein localises to the golgi apparatus membrane. Probable beta-1,4-xylosyltransferase involved in xylan biosynthesis in cell walls. The chain is Probable beta-1,4-xylosyltransferase GT43E from Oryza sativa subsp. japonica (Rice).